Reading from the N-terminus, the 242-residue chain is 1-(5-phosphoribosyl)-5-[(5-phosphoribosylamino)methylideneamino] imidazole-4-carboxamide isomerase (242 aa).

Asp-8 acts as the Proton acceptor in catalysis. The active-site Proton donor is Asp-129.

This sequence belongs to the HisA/HisF family.

It localises to the cytoplasm. It catalyses the reaction 1-(5-phospho-beta-D-ribosyl)-5-[(5-phospho-beta-D-ribosylamino)methylideneamino]imidazole-4-carboxamide = 5-[(5-phospho-1-deoxy-D-ribulos-1-ylimino)methylamino]-1-(5-phospho-beta-D-ribosyl)imidazole-4-carboxamide. It functions in the pathway amino-acid biosynthesis; L-histidine biosynthesis; L-histidine from 5-phospho-alpha-D-ribose 1-diphosphate: step 4/9. The chain is 1-(5-phosphoribosyl)-5-[(5-phosphoribosylamino)methylideneamino] imidazole-4-carboxamide isomerase from Clostridium botulinum (strain Okra / Type B1).